The following is a 307-amino-acid chain: Tropinone reductase homolog At2g29340 (307 aa).

13-37 (LVTGGASGIGYAIVEELAGFGARIH) lines the NADP(+) pocket. A substrate-binding site is contributed by S146. The active-site Proton acceptor is the Y159.

This sequence belongs to the short-chain dehydrogenases/reductases (SDR) family. SDR65C subfamily.

This Arabidopsis thaliana (Mouse-ear cress) protein is Tropinone reductase homolog At2g29340.